We begin with the raw amino-acid sequence, 110 residues long: Large ribosomal subunit protein mL60 (110 aa).

Belongs to the mitochondrion-specific ribosomal protein mL60 family. In terms of assembly, component of the mitochondrial large ribosomal subunit (mt-LSU). Mature N.crassa 74S mitochondrial ribosomes consist of a small (37S) and a large (54S) subunit. The 37S small subunit contains a 16S ribosomal RNA (16S mt-rRNA) and 32 different proteins. The 54S large subunit contains a 23S rRNA (23S mt-rRNA) and 42 different proteins.

It is found in the mitochondrion. Its function is as follows. Component of the mitochondrial ribosome (mitoribosome), a dedicated translation machinery responsible for the synthesis of mitochondrial genome-encoded proteins, including at least some of the essential transmembrane subunits of the mitochondrial respiratory chain. The mitoribosomes are attached to the mitochondrial inner membrane and translation products are cotranslationally integrated into the membrane. The polypeptide is Large ribosomal subunit protein mL60 (mrpl31) (Neurospora crassa (strain ATCC 24698 / 74-OR23-1A / CBS 708.71 / DSM 1257 / FGSC 987)).